The sequence spans 79 residues: Probable [Fe-S]-dependent transcriptional repressor (79 aa).

The iron-sulfur cluster site is built by Cys56, Cys61, Cys64, and Cys71.

Belongs to the FeoC family.

In terms of biological role, may function as a transcriptional regulator that controls feoABC expression. This chain is Probable [Fe-S]-dependent transcriptional repressor, found in Klebsiella pneumoniae subsp. pneumoniae (strain ATCC 700721 / MGH 78578).